The chain runs to 134 residues: Large ribosomal subunit protein eL32 (134 aa).

The protein belongs to the eukaryotic ribosomal protein eL32 family.

In Tetrahymena thermophila (strain SB210), this protein is Large ribosomal subunit protein eL32 (RPL32).